The following is a 217-amino-acid chain: Adenylate kinase (217 aa).

10–15 contacts ATP; sequence GAGKGT. The segment at 30–59 is NMP; that stretch reads STGDIFRAAMKNETPMGIEAKKYIDKGELV. AMP-binding positions include T31, R36, 57–59, 85–88, and Q92; these read ELV and GFPR. The interval 126-164 is LID; sequence GRFICRNCGATYHKLYNAPKVEGTCDVCGHHEFYQRDDD. R127 is a binding site for ATP. Residues C130 and C133 each coordinate Zn(2+). Residue 136 to 137 coordinates ATP; that stretch reads TY. Positions 150 and 153 each coordinate Zn(2+). Residues R161 and R172 each coordinate AMP. An ATP-binding site is contributed by Q200.

Belongs to the adenylate kinase family. In terms of assembly, monomer.

The protein localises to the cytoplasm. The enzyme catalyses AMP + ATP = 2 ADP. The protein operates within purine metabolism; AMP biosynthesis via salvage pathway; AMP from ADP: step 1/1. Catalyzes the reversible transfer of the terminal phosphate group between ATP and AMP. Plays an important role in cellular energy homeostasis and in adenine nucleotide metabolism. In Limosilactobacillus reuteri subsp. reuteri (strain JCM 1112) (Lactobacillus reuteri), this protein is Adenylate kinase.